The primary structure comprises 443 residues: Xaa-Pro dipeptidase (443 aa).

Mn(2+) contacts are provided by Asp-246, Asp-257, His-339, Glu-384, and Glu-423.

It belongs to the peptidase M24B family. Bacterial-type prolidase subfamily. Mn(2+) is required as a cofactor.

It catalyses the reaction Xaa-L-Pro dipeptide + H2O = an L-alpha-amino acid + L-proline. Splits dipeptides with a prolyl residue in the C-terminal position. This Pectobacterium carotovorum subsp. carotovorum (strain PC1) protein is Xaa-Pro dipeptidase.